Reading from the N-terminus, the 80-residue chain is Exodeoxyribonuclease 7 small subunit (80 aa).

The protein belongs to the XseB family. Heterooligomer composed of large and small subunits.

It localises to the cytoplasm. It carries out the reaction Exonucleolytic cleavage in either 5'- to 3'- or 3'- to 5'-direction to yield nucleoside 5'-phosphates.. Bidirectionally degrades single-stranded DNA into large acid-insoluble oligonucleotides, which are then degraded further into small acid-soluble oligonucleotides. This Vibrio vulnificus (strain CMCP6) protein is Exodeoxyribonuclease 7 small subunit.